We begin with the raw amino-acid sequence, 145 residues long: Large ribosomal subunit protein uL15 (145 aa).

A disordered region spans residues M1–G50. The segment covering G22–V35 has biased composition (gly residues).

It belongs to the universal ribosomal protein uL15 family. Part of the 50S ribosomal subunit.

Its function is as follows. Binds to the 23S rRNA. The sequence is that of Large ribosomal subunit protein uL15 from Aeromonas salmonicida (strain A449).